Reading from the N-terminus, the 210-residue chain is Germin-like protein subfamily 3 member 4 (210 aa).

The N-terminal stretch at 1–18 (MKFFVVIVFCAIFLSVSG) is a signal peptide. Cysteine 27 and cysteine 44 are oxidised to a cystine. Residues 58 to 190 (TKLTEAGDTD…VFGIDQEHIK (133 aa)) form the Cupin type-1 domain. N-linked (GlcNAc...) asparagine glycosylation is present at asparagine 73. Histidine 106, histidine 108, glutamate 113, and histidine 152 together coordinate Mn(2+).

This sequence belongs to the germin family. As to quaternary structure, oligomer (believed to be a pentamer but probably hexamer).

The protein localises to the secreted. The protein resides in the extracellular space. Its subcellular location is the apoplast. In terms of biological role, may play a role in plant defense. Probably has no oxalate oxidase activity even if the active site is conserved. The protein is Germin-like protein subfamily 3 member 4 of Arabidopsis thaliana (Mouse-ear cress).